The following is a 330-amino-acid chain: Membrane progestin receptor gamma (330 aa).

The Cytoplasmic portion of the chain corresponds to 1-51; that stretch reads MLSLKLPRLFRIDQVPQVFHEQGILFGYRHPQSSATACILSLFQMTNETLN. Residues 52–72 traverse the membrane as a helical segment; that stretch reads IWTHLLPFWFFVWRFMTALYV. The Extracellular portion of the chain corresponds to 73 to 81; sequence TDIQNDSYS. A helical transmembrane segment spans residues 82–101; that stretch reads WPMLVYMCTSCVYPLASSCA. Residues 102-113 lie on the Cytoplasmic side of the membrane; the sequence is HTFSSMSKNARH. A helical transmembrane segment spans residues 114–134; that stretch reads ICYFLDYGAVNLFSLGSAIAY. Topologically, residues 135–141 are extracellular; it reads SAYTFPD. A helical transmembrane segment spans residues 142 to 162; sequence ALVCSTFHECYVALAVLNTIL. Residues 163–186 lie on the Cytoplasmic side of the membrane; that stretch reads STGLSCYSRFLELQKPRLCKLLRV. The chain crosses the membrane as a helical span at residues 187–207; the sequence is LAFAYPYTWDSLPIFYRLFLF. Topologically, residues 208 to 253 are extracellular; that stretch reads PGESSRNEAMLYHQKHMGMTLLASFFYSAHLPERLAPGRFDYIGHS. The helical transmembrane segment at 254–274 threads the bilayer; sequence HQLFHVCVILATHLQMEAILL. Residues 275–294 lie on the Cytoplasmic side of the membrane; that stretch reads DKTLRREWLLATSRPFSFPQ. A helical membrane pass occupies residues 295–315; sequence IAAAMLLCIIFSLSNIIYFSA. Over 316 to 330 the chain is Extracellular; it reads ALYRIPEPELHEKET.

It belongs to the ADIPOR family.

It localises to the cell membrane. Functionally, plasma membrane progesterone (P4) receptor coupled to G proteins. Seems to act through a G(i) mediated pathway. May be involved in oocyte maturation. In Mus musculus (Mouse), this protein is Membrane progestin receptor gamma.